A 135-amino-acid polypeptide reads, in one-letter code: uncharacterized protein (135 aa).

Residues 8-123 (PKGIIVLKTL…IFIYVAINKT (116 aa)) enclose the HotDog ACOT-type domain.

This sequence belongs to the acyl coenzyme A hydrolase family.

This is an uncharacterized protein from Buchnera aphidicola subsp. Acyrthosiphon pisum (strain APS) (Acyrthosiphon pisum symbiotic bacterium).